Consider the following 926-residue polypeptide: Glycogenin (926 aa).

UDP-binding residues include Leu-10, Thr-12, Tyr-16, and Arg-85. Residues Leu-10, Thr-12, Tyr-16, Arg-85, Lys-94, Asp-111, Ala-112, Asp-113, Asn-145, Ser-146, Asp-184, Asp-187, and Gln-188 each coordinate UDP-alpha-D-glucose. Asp-111, Ala-112, and Asp-113 together coordinate UDP. Asp-111 serves as a coordination point for Mn(2+). Asp-113 contacts Mn(2+). A glycan (O-linked (Glc...) tyrosine) is linked at Tyr-219. His-236, Gly-239, and Lys-242 together coordinate UDP. A Mn(2+)-binding site is contributed by His-236. The UDP-alpha-D-glucose site is built by Gly-239 and Lys-242. 5 disordered regions span residues 379 to 432, 452 to 476, 547 to 584, 611 to 749, and 768 to 903; these read PSVS…PEMS, YYAH…LPKE, SIQN…PPRH, MSGK…ETVQ, and LPHA…PNTD. Over residues 386 to 402 the composition is skewed to pro residues; sequence LTPPPADAAPAPAPAPV. The segment covering 404-413 has biased composition (polar residues); the sequence is TQTEQKTAQP. Residues 456–469 show a composition bias toward basic and acidic residues; it reads PESHRPATEHKEPE. Positions 557-566 are enriched in low complexity; it reads AHSQHQSHAT. A compositionally biased stretch (polar residues) spans 655–683; sequence SLHSLQSVPGTPRTQYSTFGKSPRLTNAR. Positions 692-704 are enriched in acidic residues; it reads EQPEDSADGDDEN. Basic and acidic residues predominate over residues 733–745; it reads DRWAQTDRVKTVD. The segment covering 788–798 has biased composition (gly residues); it reads SGNGRAGGGGQ. Over residues 800-812 the composition is skewed to polar residues; sequence EAQTQHQSTYYEY. Composition is skewed to low complexity over residues 813–824 and 851–875; these read QQQHPHSQQSRQ and HAQG…NPNL.

The protein belongs to the glycosyltransferase 8 family. Glycogenin subfamily. Requires Mn(2+) as cofactor.

Its subcellular location is the cytoplasm. The protein resides in the vacuole. The enzyme catalyses L-tyrosyl-[glycogenin] + UDP-alpha-D-glucose = alpha-D-glucosyl-L-tyrosyl-[glycogenin] + UDP + H(+). The catalysed reaction is [1,4-alpha-D-glucosyl](n)-L-tyrosyl-[glycogenin] + UDP-alpha-D-glucose = [1,4-alpha-D-glucosyl](n+1)-L-tyrosyl-[glycogenin] + UDP + H(+). Self-glucosylating initiator of glycogen synthesis. It catalyzes the formation of a short alpha (1,4)-glucosyl chain covalently attached via a glucose 1-O-tyrosyl linkage to internal tyrosine residues and these chains act as primers for the elongation reaction catalyzed by glycogen synthase. The protein is Glycogenin of Cryptococcus neoformans var. grubii serotype A (strain H99 / ATCC 208821 / CBS 10515 / FGSC 9487) (Filobasidiella neoformans var. grubii).